The primary structure comprises 427 residues: MSRSKRDNNFYSVEIGDSTFTVLKRYQNLKPIGSGAQGIVCAAYDAILERNVAIKKLSRPFQNQTHAKRAYRELVLMKCVNHKNIIGLLNVFTPQKSLEEFQDVYIVMELMDANLCQVIQMELDHERMSYLLYQMLCGIKHLHSAGIIHRDLKPSNIVVKSDCTLKILDFGLARTAGTSFMMTPYVVTRYYRAPEVILGMGYKENVDLWSVGCIMGEMVCHKILFPGRDYIDQWNKVIEQLGTPCPEFMKKLQPTVRTYVENRPKYAGYSFEKLFPDVLFPADSEHNKLKASQARDLLSKMLVIDASKRISVDEALQHPYINVWYDPSEAEAPPPKIPDKQLDEREHTIEEWKELIYKEVMDLEERTKNGVIRGQPSPLGAAVINGSQHPSSSSSVNDVSSMSTDPTLASDTDSSLEAAAGPLGCCR.

A Protein kinase domain is found at 26-321 (YQNLKPIGSG…VDEALQHPYI (296 aa)). ATP contacts are provided by residues 32–40 (IGSGAQGIV) and K55. C116 bears the S-nitrosocysteine mark. D151 (proton acceptor) is an active-site residue. Position 183 is a phosphothreonine; by MAP2K7 (T183). The TXY motif lies at 183-185 (TPY). Y185 carries the phosphotyrosine; by MAP2K4 modification. A phosphoserine mark is found at M301 and S377. Positions 371-427 (VIRGQPSPLGAAVINGSQHPSSSSSVNDVSSMSTDPTLASDTDSSLEAAAGPLGCCR) are disordered. Low complexity predominate over residues 387-403 (SQHPSSSSSVNDVSSMS). Polar residues predominate over residues 404-415 (TDPTLASDTDSS).

It belongs to the protein kinase superfamily. CMGC Ser/Thr protein kinase family. MAP kinase subfamily. As to quaternary structure, forms a complex with MAPK8IP1 and ARHGEF28. Found in a complex with SH3RF1, RAC1, MAP3K11/MLK3, MAP2K7/MKK7 and MAPK8IP1/JIP1. Found in a complex with SH3RF1, RAC2, MAP3K7/TAK1, MAP2K7/MKK7, MAPK8IP1/JIP1 and MAPK9/JNK2. Binds to at least four scaffolding proteins, MAPK8IP1/JIP-1, MAPK8IP2/JIP-2, MAPK8IP3/JIP-3/JSAP1 and SPAG9/MAPK8IP4/JIP-4. These proteins also bind other components of the JNK signaling pathway. Interacts with TP53 and WWOX. Interacts with JAMP. Interacts with HSF1 (via D domain and preferentially with hyperphosphorylated form); this interaction occurs under both normal growth conditions and immediately upon heat shock. Interacts (phosphorylated form) with NFE2; the interaction phosphorylates NFE2 in undifferentiated cells. Interacts with NFATC4. Interacts with MECOM; regulates JNK signaling. Interacts with PIN1; this interaction mediates MAPK8 conformational changes leading to the binding of MAPK8 to its substrates. Interacts with GRIPAP1. Interacts with POU5F1; phosphorylates POU5F1 at 'Ser-355'. Interacts with STMN2, STMN3 and STMN4. Interacts with HSF4. Requires Mg(2+) as cofactor. Dually phosphorylated on Thr-183 and Tyr-185 by MAP2K7 and MAP2K4, which activates the enzyme. Phosphorylated by TAOK2. May be phosphorylated at Thr-183 and Tyr-185 by MAP3K1/MEKK1. Phosphorylated form is more concentrated at synapses than none-phosphorylated.

Its subcellular location is the cytoplasm. The protein localises to the nucleus. It is found in the synapse. It carries out the reaction L-seryl-[protein] + ATP = O-phospho-L-seryl-[protein] + ADP + H(+). The catalysed reaction is L-threonyl-[protein] + ATP = O-phospho-L-threonyl-[protein] + ADP + H(+). Its activity is regulated as follows. Activated by threonine and tyrosine phosphorylation by either of two dual specificity kinases, MAP2K4 and MAP2K7. MAP2K4 shows a strong preference for Tyr-185 while MAP2K7 phosphorylates Tyr-183 preferentially. Inhibited by dual specificity phosphatases, such as DUSP1. Inhibited by SERPINB3. Functionally, serine/threonine-protein kinase involved in various processes such as cell proliferation, differentiation, migration, transformation and programmed cell death. Extracellular stimuli such as pro-inflammatory cytokines or physical stress stimulate the stress-activated protein kinase/c-Jun N-terminal kinase (SAP/JNK) signaling pathway. In this cascade, two dual specificity kinases MAP2K4/MKK4 and MAP2K7/MKK7 phosphorylate and activate MAPK8/JNK1. In turn, MAPK8/JNK1 phosphorylates a number of transcription factors, primarily components of AP-1 such as JUN, JDP2 and ATF2 and thus regulates AP-1 transcriptional activity. Phosphorylates the replication licensing factor CDT1, inhibiting the interaction between CDT1 and the histone H4 acetylase HBO1 to replication origins. Loss of this interaction abrogates the acetylation required for replication initiation. Promotes stressed cell apoptosis by phosphorylating key regulatory factors including p53/TP53 and Yes-associates protein YAP1. In T-cells, MAPK8 and MAPK9 are required for polarized differentiation of T-helper cells into Th1 cells. Contributes to the survival of erythroid cells by phosphorylating the antagonist of cell death BAD upon EPO stimulation. Mediates starvation-induced BCL2 phosphorylation, BCL2 dissociation from BECN1, and thus activation of autophagy. Phosphorylates STMN2 and hence regulates microtubule dynamics, controlling neurite elongation in cortical neurons. In the developing brain, through its cytoplasmic activity on STMN2, negatively regulates the rate of exit from multipolar stage and of radial migration from the ventricular zone. Phosphorylates several other substrates including heat shock factor protein 4 (HSF4), the deacetylase SIRT1, ELK1, or the E3 ligase ITCH. Phosphorylates the CLOCK-BMAL1 heterodimer and plays a role in the regulation of the circadian clock. Phosphorylates the heat shock transcription factor HSF1, suppressing HSF1-induced transcriptional activity. Phosphorylates POU5F1, which results in the inhibition of POU5F1's transcriptional activity and enhances its proteasomal degradation. Phosphorylates JUND and this phosphorylation is inhibited in the presence of MEN1. In neurons, phosphorylates SYT4 which captures neuronal dense core vesicles at synapses. Phosphorylates EIF4ENIF1/4-ET in response to oxidative stress, promoting P-body assembly. Phosphorylates SIRT6 in response to oxidative stress, stimulating its mono-ADP-ribosyltransferase activity. Phosphorylates NLRP3, promoting assembly of the NLRP3 inflammasome. Phosphorylates ALKBH5 in response to reactive oxygen species (ROS), promoting ALKBH5 sumoylation and inactivation. In terms of biological role, JNK1 isoforms display different binding patterns: beta-1 preferentially binds to c-Jun, whereas alpha-1, alpha-2, and beta-2 have a similar low level of binding to both c-Jun or ATF2. However, there is no correlation between binding and phosphorylation, which is achieved at about the same efficiency by all isoforms. The protein is Mitogen-activated protein kinase 8 (MAPK8) of Homo sapiens (Human).